The sequence spans 448 residues: N-succinylarginine dihydrolase (448 aa).

Substrate is bound by residues 19–28 (GGLSYGNVAS), Asn-110, and 137–138 (HR). Glu-174 is an active-site residue. Residue Arg-214 participates in substrate binding. His-250 is an active-site residue. Substrate-binding residues include Asp-252 and Asn-365. Cys-371 functions as the Nucleophile in the catalytic mechanism.

It belongs to the succinylarginine dihydrolase family. As to quaternary structure, homodimer.

It catalyses the reaction N(2)-succinyl-L-arginine + 2 H2O + 2 H(+) = N(2)-succinyl-L-ornithine + 2 NH4(+) + CO2. Its pathway is amino-acid degradation; L-arginine degradation via AST pathway; L-glutamate and succinate from L-arginine: step 2/5. Functionally, catalyzes the hydrolysis of N(2)-succinylarginine into N(2)-succinylornithine, ammonia and CO(2). The chain is N-succinylarginine dihydrolase from Pseudomonas fluorescens (strain Pf0-1).